Reading from the N-terminus, the 282-residue chain is UDP-3-O-acyl-N-acetylglucosamine deacetylase (282 aa).

Positions 80, 240, and 244 each coordinate Zn(2+). Catalysis depends on H267, which acts as the Proton donor.

The protein belongs to the LpxC family. It depends on Zn(2+) as a cofactor.

Its subcellular location is the plastid. The protein localises to the chloroplast. It catalyses the reaction a UDP-3-O-[(3R)-3-hydroxyacyl]-N-acetyl-alpha-D-glucosamine + H2O = a UDP-3-O-[(3R)-3-hydroxyacyl]-alpha-D-glucosamine + acetate. It functions in the pathway glycolipid biosynthesis; lipid IV(A) biosynthesis; lipid IV(A) from (3R)-3-hydroxytetradecanoyl-[acyl-carrier-protein] and UDP-N-acetyl-alpha-D-glucosamine: step 2/6. Functionally, catalyzes the hydrolysis of UDP-3-O-myristoyl-N-acetylglucosamine to form UDP-3-O-myristoylglucosamine and acetate. Involved in the biosynthesis of lipid A, a phosphorylated glycolipid that in bacteria anchors the lipopolysaccharide to the outer membrane of the cell. The target for the lipopolysaccharides produced in the chloroplast could either be the cell envelope of the eukaryote or the plastid membrane. This is UDP-3-O-acyl-N-acetylglucosamine deacetylase from Cyanidium caldarium (Red alga).